The following is a 394-amino-acid chain: 1-deoxy-D-xylulose 5-phosphate reductoisomerase (394 aa).

6 residues coordinate NADPH: Thr10, Gly11, Ser12, Ile13, Asn38, and Asn125. A 1-deoxy-D-xylulose 5-phosphate-binding site is contributed by Lys126. Residue Glu127 participates in NADPH binding. Asp151 contributes to the Mn(2+) binding site. Ser152, Glu153, Ser182, and His205 together coordinate 1-deoxy-D-xylulose 5-phosphate. Residue Glu153 coordinates Mn(2+). Gly211 contacts NADPH. Residues Ser218, Asn223, Lys224, and Glu227 each coordinate 1-deoxy-D-xylulose 5-phosphate. Glu227 lines the Mn(2+) pocket.

Belongs to the DXR family. The cofactor is Mg(2+). Mn(2+) is required as a cofactor.

It catalyses the reaction 2-C-methyl-D-erythritol 4-phosphate + NADP(+) = 1-deoxy-D-xylulose 5-phosphate + NADPH + H(+). It participates in isoprenoid biosynthesis; isopentenyl diphosphate biosynthesis via DXP pathway; isopentenyl diphosphate from 1-deoxy-D-xylulose 5-phosphate: step 1/6. In terms of biological role, catalyzes the NADPH-dependent rearrangement and reduction of 1-deoxy-D-xylulose-5-phosphate (DXP) to 2-C-methyl-D-erythritol 4-phosphate (MEP). The sequence is that of 1-deoxy-D-xylulose 5-phosphate reductoisomerase from Methylococcus capsulatus (strain ATCC 33009 / NCIMB 11132 / Bath).